The chain runs to 188 residues: Elongation factor P (188 aa).

The protein belongs to the elongation factor P family.

The protein resides in the cytoplasm. The protein operates within protein biosynthesis; polypeptide chain elongation. In terms of biological role, involved in peptide bond synthesis. Stimulates efficient translation and peptide-bond synthesis on native or reconstituted 70S ribosomes in vitro. Probably functions indirectly by altering the affinity of the ribosome for aminoacyl-tRNA, thus increasing their reactivity as acceptors for peptidyl transferase. The chain is Elongation factor P from Flavobacterium johnsoniae (strain ATCC 17061 / DSM 2064 / JCM 8514 / BCRC 14874 / CCUG 350202 / NBRC 14942 / NCIMB 11054 / UW101) (Cytophaga johnsonae).